Reading from the N-terminus, the 567-residue chain is Cytochrome P450 monooxygenase 231 (567 aa).

A helical transmembrane segment spans residues 3-23 (VSTNELAILAIVLLATGVLFY). Residues N81 and N223 are each glycosylated (N-linked (GlcNAc...) asparagine). Heme is bound at residue C475.

The protein belongs to the cytochrome P450 family. Heme serves as cofactor.

Its subcellular location is the membrane. The protein operates within secondary metabolite biosynthesis. Its function is as follows. Cytochrome P450 monooxygenase that is able to use anthracene, carbazole, pyrene, and phenanthrene as substrates for oxidation. These multifunctional properties against a series of polycyclic aromatic hydrocarbons (PAHs) suggest that CYP231 would play important roles, at least in part, in fungal metabolic systems involved in xenobiotic detoxification. The polypeptide is Cytochrome P450 monooxygenase 231 (Postia placenta (strain ATCC 44394 / Madison 698-R) (Brown rot fungus)).